The following is a 201-amino-acid chain: Dermatopontin (201 aa).

The first 18 residues, 1 to 18 (MDLTLLWVLLPLVTTAWG), serve as a signal peptide directing secretion. Glutamine 19 is subject to Pyrrolidone carboxylic acid. Residues 19–186 (QYGGYGYPYQ…AVERDRQWKF (168 aa)) form a 2 X 53-55 AA tandem repeats region. Sulfotyrosine is present on tyrosine 23. 4 tandem repeats follow at residues 26-79 (PYQQ…ACMP), 70-75 (DRQWNY), 80-135 (TPQS…CCRY), and 125-130 (DREWQF). 5 cysteine pairs are disulfide-bonded: cysteine 50–cysteine 77, cysteine 90–cysteine 132, cysteine 106–cysteine 133, cysteine 139–cysteine 196, and cysteine 143–cysteine 189. The tract at residues 70 to 186 (DRQWNYACMP…AVERDRQWKF (117 aa)) is 3 X 6 AA tandem repeats of D-R-[EQ]-W-[NQK]-[FY]. A sulfotyrosine mark is found at tyrosine 162, tyrosine 164, and tyrosine 167. The 2-3 repeat unit spans residues 181 to 186 (DRQWKF). Tyrosine 194 bears the Sulfotyrosine mark.

The protein belongs to the dermatopontin family. As to quaternary structure, interacts with TGFB1, DCN and collagen. In terms of processing, sulfated on tyrosine residue(s).

Its subcellular location is the secreted. The protein localises to the extracellular space. The protein resides in the extracellular matrix. In terms of biological role, seems to mediate adhesion by cell surface integrin binding. May serve as a communication link between the dermal fibroblast cell surface and its extracellular matrix environment. Enhances TGFB1 activity. Inhibits cell proliferation. Accelerates collagen fibril formation, and stabilizes collagen fibrils against low-temperature dissociation. This chain is Dermatopontin (Dpt), found in Mus musculus (Mouse).